Here is a 452-residue protein sequence, read N- to C-terminus: Protein FAM222A (452 aa).

Belongs to the FAM222 family.

In Homo sapiens (Human), this protein is Protein FAM222A (FAM222A).